A 506-amino-acid chain; its full sequence is Maturase K (506 aa).

Belongs to the intron maturase 2 family. MatK subfamily.

The protein localises to the plastid. It localises to the chloroplast. Its function is as follows. Usually encoded in the trnK tRNA gene intron. Probably assists in splicing its own and other chloroplast group II introns. The polypeptide is Maturase K (Trifolium spumosum (Mediterranean clover)).